The chain runs to 508 residues: Hydroxymethylglutaryl-CoA synthase, mitochondrial (508 aa).

The N-terminal 37 residues, 1–37, are a transit peptide targeting the mitochondrion; it reads MQRLLTPVKRILQLTRAVQETSLTPARLLPVAHQRFS. At lysine 52 the chain carries N6-succinyllysine. Glutamate 80 and alanine 81 together coordinate (3S)-3-hydroxy-3-methylglutaryl-CoA. An N6-acetyllysine; alternate modification is found at lysine 83. Lysine 83 bears the N6-succinyllysine; alternate mark. Glutamate 132 functions as the Proton donor/acceptor in the catalytic mechanism. (3S)-3-hydroxy-3-methylglutaryl-CoA contacts are provided by cysteine 166, asparagine 204, and threonine 208. Catalysis depends on cysteine 166, which acts as the Acyl-thioester intermediate. At lysine 221 the chain carries N6-succinyllysine. Lysine 243 is modified (N6-acetyllysine). Lysine 256 carries the N6-acetyllysine; alternate modification. Residue lysine 256 is modified to N6-succinyllysine; alternate. Serine 258 and histidine 301 together coordinate (3S)-3-hydroxy-3-methylglutaryl-CoA. Histidine 301 (proton donor/acceptor) is an active-site residue. At lysine 306 the chain carries N6-acetyllysine. Lysine 310 lines the (3S)-3-hydroxy-3-methylglutaryl-CoA pocket. An N6-acetyllysine; alternate modification is found at lysine 310. Residue lysine 310 is modified to N6-succinyllysine; alternate. At lysine 333 the chain carries N6-succinyllysine. Lysine 342, lysine 350, lysine 354, and lysine 358 each carry N6-acetyllysine; alternate. N6-succinyllysine; alternate is present on residues lysine 342, lysine 350, lysine 354, and lysine 358. Residues asparagine 380 and serine 414 each coordinate (3S)-3-hydroxy-3-methylglutaryl-CoA. Serine 433 is subject to Phosphoserine. N6-acetyllysine is present on lysine 437. Serine 440 carries the phosphoserine modification. Lysine 447 bears the N6-acetyllysine; alternate mark. Lysine 447 carries the N6-succinyllysine; alternate modification. Phosphoserine is present on serine 456. Lysine 473 is subject to N6-acetyllysine; alternate. Position 473 is an N6-succinyllysine; alternate (lysine 473). Position 477 is a phosphoserine (serine 477).

It belongs to the thiolase-like superfamily. HMG-CoA synthase family. In terms of assembly, homodimer. Succinylated. Desuccinylated by SIRT5. Succinylation, at least at Lys-83 and Lys-310, inhibits the enzymatic activity. As to expression, expression in liver is 200-fold higher than in any other tissue. Low expression in colon, kidney, testis, and pancreas. Very low expression in heart and skeletal muscle. Not detected in brain. Highest expression detected in heart and skeletal muscle.

It localises to the mitochondrion. The catalysed reaction is acetoacetyl-CoA + acetyl-CoA + H2O = (3S)-3-hydroxy-3-methylglutaryl-CoA + CoA + H(+). Its pathway is metabolic intermediate biosynthesis; (R)-mevalonate biosynthesis; (R)-mevalonate from acetyl-CoA: step 2/3. Catalyzes the first irreversible step in ketogenesis, condensing acetyl-CoA to acetoacetyl-CoA to form HMG-CoA, which is converted by HMG-CoA reductase (HMGCR) into mevalonate. The sequence is that of Hydroxymethylglutaryl-CoA synthase, mitochondrial (HMGCS2) from Homo sapiens (Human).